Consider the following 191-residue polypeptide: Phosphoheptose isomerase (191 aa).

The region spanning 37 to 191 (IAESFKQDGK…IIQLIEKEME (155 aa)) is the SIS domain. 52–54 (NGG) contacts substrate. Positions 61 and 65 each coordinate Zn(2+). Residues E65, 93–94 (ND), 119–121 (STS), S124, and Q172 contribute to the substrate site. Residues Q172 and H180 each contribute to the Zn(2+) site.

This sequence belongs to the SIS family. GmhA subfamily. Homotetramer. It depends on Zn(2+) as a cofactor.

The protein localises to the cytoplasm. The enzyme catalyses 2 D-sedoheptulose 7-phosphate = D-glycero-alpha-D-manno-heptose 7-phosphate + D-glycero-beta-D-manno-heptose 7-phosphate. Its pathway is carbohydrate biosynthesis; D-glycero-D-manno-heptose 7-phosphate biosynthesis; D-glycero-alpha-D-manno-heptose 7-phosphate and D-glycero-beta-D-manno-heptose 7-phosphate from sedoheptulose 7-phosphate: step 1/1. The protein operates within bacterial outer membrane biogenesis; LPS core biosynthesis. Functionally, catalyzes the isomerization of sedoheptulose 7-phosphate in D-glycero-D-manno-heptose 7-phosphate. The sequence is that of Phosphoheptose isomerase from Vibrio vulnificus (strain CMCP6).